A 418-amino-acid chain; its full sequence is uncharacterized protein (418 aa).

The region spanning 7–158 is the N-acetyltransferase domain; that stretch reads IDVRPIAEAE…TGLDPRWSGP (152 aa). Residues 87–89 and 95–100 each bind acetyl-CoA; these read VTV and RRGLLT. The active-site Proton donor is the Y128. The active-site Proton acceptor; via carboxylate is F418.

It belongs to the acetyltransferase Eis family. Homohexamer; trimer of dimers.

This is an uncharacterized protein from Streptomyces avermitilis (strain ATCC 31267 / DSM 46492 / JCM 5070 / NBRC 14893 / NCIMB 12804 / NRRL 8165 / MA-4680).